Here is a 343-residue protein sequence, read N- to C-terminus: Methionine import ATP-binding protein MetN 3 (343 aa).

Residues 2–241 (IELSNITKVF…PKTPLAQKFI (240 aa)) form the ABC transporter domain. ATP is bound at residue 38-45 (GASGAGKS).

The protein belongs to the ABC transporter superfamily. Methionine importer (TC 3.A.1.24) family. As to quaternary structure, the complex is composed of two ATP-binding proteins (MetN), two transmembrane proteins (MetI) and a solute-binding protein (MetQ).

It is found in the cell inner membrane. The enzyme catalyses L-methionine(out) + ATP + H2O = L-methionine(in) + ADP + phosphate + H(+). It catalyses the reaction D-methionine(out) + ATP + H2O = D-methionine(in) + ADP + phosphate + H(+). In terms of biological role, part of the ABC transporter complex MetNIQ involved in methionine import. Responsible for energy coupling to the transport system. The sequence is that of Methionine import ATP-binding protein MetN 3 from Pectobacterium atrosepticum (strain SCRI 1043 / ATCC BAA-672) (Erwinia carotovora subsp. atroseptica).